Reading from the N-terminus, the 105-residue chain is MRPEKLDAEAIAEQLHRMEGWVLAEDGASIWKAFRFRNFAEAFSFMTQCALAAEKLNHHPEWFNVYNKVDVTLSTHDASGLTELDFKLAAKMDQAAAGRMPDHLK.

This sequence belongs to the pterin-4-alpha-carbinolamine dehydratase family.

It carries out the reaction (4aS,6R)-4a-hydroxy-L-erythro-5,6,7,8-tetrahydrobiopterin = (6R)-L-erythro-6,7-dihydrobiopterin + H2O. This is Putative pterin-4-alpha-carbinolamine dehydratase from Sinorhizobium fredii (strain NBRC 101917 / NGR234).